The sequence spans 901 residues: Clathrin coat assembly protein AP180 (901 aa).

An ENTH domain is found at 14–145; that stretch reads QYSVTGSAVA…FSYRQMAFDF (132 aa). 4 disordered regions span residues 285–326, 397–424, 497–522, and 573–606; these read LEGK…DTSP, PISD…STTT, PETS…PSPA, and AAAP…PESS. Residues S296, S300, and S306 each carry the phosphoserine modification. Polar residues predominate over residues 302–324; the sequence is LSKSSPATTVTSPNSTPAKTIDT. Residue T310 is glycosylated (O-linked (GlcNAc) threonine). S313 is subject to Phosphoserine. The residue at position 317 (T317) is a Phosphothreonine. Low complexity-rich tracts occupy residues 410-424 and 500-511; these read TTTT…STTT and SAPVVTPTASTA. Positions 512 to 522 are enriched in pro residues; it reads PPVPATAPSPA. A phosphoserine mark is found at S594, S600, S621, S627, and S761. Disordered stretches follow at residues 803–845 and 857–901; these read SAGV…GMTM and MMRP…KDFL. A compositionally biased stretch (low complexity) spans 835–845; the sequence is GMPPSGTGMTM. An Asymmetric dimethylarginine; alternate modification is found at R859. R859 bears the Omega-N-methylarginine; alternate mark. Residues 870–882 are compositionally biased toward polar residues; that stretch reads TQLSPSPTPATQS. Over residues 887–901 the composition is skewed to basic and acidic residues; that stretch reads PAKDPLADLNIKDFL.

It belongs to the PICALM/SNAP91 family. Binds AP2A2. Interacts with AP2B1; clathrin competes with SNAP91. Post-translationally, thr-310 can be modified by the addition of N-acetylglucosamine which can be further phosphorylated. There is no evidence for direct Thr-310 phosphorylation. Brain. Associated with the synapses.

It localises to the cell membrane. The protein resides in the membrane. The protein localises to the coated pit. Adaptins are components of the adaptor complexes which link clathrin to receptors in coated vesicles. Clathrin-associated protein complexes are believed to interact with the cytoplasmic tails of membrane proteins, leading to their selection and concentration. Binding of AP180 to clathrin triskelia induces their assembly into 60-70 nm coats. The chain is Clathrin coat assembly protein AP180 (Snap91) from Mus musculus (Mouse).